The following is a 504-amino-acid chain: ATP-dependent RNA helicase DBP3 (504 aa).

Over residues 1–14 the composition is skewed to basic and acidic residues; that stretch reads MSKDELKDKKRKVE. Residues 1–65 form a disordered region; sequence MSKDELKDKK…KSETESFAAS (65 aa). Positions 20-53 are enriched in basic residues; that stretch reads SKKKLKKDKKDKKDKKDKKDKKDKKEKKEKKEKK. The Q motif signature appears at 94 to 120; it reads LDFSQVSFIDQIQKEISKFPKPTPIQA. Residues 123–296 form the Helicase ATP-binding domain; that stretch reads WPYLLAGKDV…SSFMSEPVKV (174 aa). 136 to 143 is an ATP binding site; sequence AETGSGKT. A DEAD box motif is present at residues 243–246; the sequence is DEAD. The Helicase C-terminal domain maps to 325–474; that stretch reads KLLELLKKYH…PVPEELKKFG (150 aa).

This sequence belongs to the DEAD box helicase family. DDX5/DBP2 subfamily.

Its subcellular location is the nucleus. The protein localises to the nucleolus. The catalysed reaction is ATP + H2O = ADP + phosphate + H(+). In terms of biological role, ATP-dependent RNA helicase required for 60S ribosomal subunit synthesis. Involved in efficient pre-rRNA processing, predominantly at site A3, which is necessary for the normal formation of 25S and 5.8S rRNAs. This is ATP-dependent RNA helicase DBP3 (DBP3) from Kluyveromyces lactis (strain ATCC 8585 / CBS 2359 / DSM 70799 / NBRC 1267 / NRRL Y-1140 / WM37) (Yeast).